The sequence spans 636 residues: 1-deoxy-D-xylulose-5-phosphate synthase (636 aa).

Thiamine diphosphate-binding positions include His74 and 115–117 (GHA). Mg(2+) is bound at residue Asp146. Thiamine diphosphate contacts are provided by residues 147-148 (GA), Asn175, Tyr285, and Glu368. Asn175 contributes to the Mg(2+) binding site.

This sequence belongs to the transketolase family. DXPS subfamily. Homodimer. Requires Mg(2+) as cofactor. The cofactor is thiamine diphosphate.

It carries out the reaction D-glyceraldehyde 3-phosphate + pyruvate + H(+) = 1-deoxy-D-xylulose 5-phosphate + CO2. It participates in metabolic intermediate biosynthesis; 1-deoxy-D-xylulose 5-phosphate biosynthesis; 1-deoxy-D-xylulose 5-phosphate from D-glyceraldehyde 3-phosphate and pyruvate: step 1/1. In terms of biological role, catalyzes the acyloin condensation reaction between C atoms 2 and 3 of pyruvate and glyceraldehyde 3-phosphate to yield 1-deoxy-D-xylulose-5-phosphate (DXP). This chain is 1-deoxy-D-xylulose-5-phosphate synthase, found in Anaeromyxobacter dehalogenans (strain 2CP-C).